A 203-amino-acid polypeptide reads, in one-letter code: Ras-related protein RABD2a (203 aa).

Residues 15-23 (GDSGVGKSC), 33-40 (YVESYIST), 63-67 (DTAGQ), 121-124 (NKSD), and 151-153 (SAK) contribute to the GTP site. The Effector region motif lies at 37–45 (YISTIGVDF). A disordered region spans residues 176 to 203 (QPAGNNARPPTVQIRGQPVAQKNGCCST). S-geranylgeranyl cysteine attachment occurs at residues cysteine 200 and cysteine 201.

The protein belongs to the small GTPase superfamily. Rab family. As to quaternary structure, does not interact with GC5.

The protein localises to the golgi apparatus. It is found in the trans-Golgi network membrane. It localises to the golgi apparatus membrane. In terms of biological role, protein transport. Regulator of membrane traffic from the Golgi apparatus towards the endoplasmic reticulum (ER). The protein is Ras-related protein RABD2a (RABD2A) of Arabidopsis thaliana (Mouse-ear cress).